Consider the following 371-residue polypeptide: Protein NDRG2 (371 aa).

Residues methionine 1–proline 21 form a disordered region. Residue alanine 2 is modified to N-acetylalanine. Threonine 20 carries the phosphothreonine modification. A phosphoserine mark is found at serine 326 and serine 328. At threonine 330 the chain carries Phosphothreonine. Serine 332 bears the Phosphoserine mark. Threonine 334 bears the Phosphothreonine mark. The disordered stretch occupies residues threonine 334–cysteine 371. 3 positions are modified to phosphoserine: serine 335, serine 338, and serine 344. Low complexity predominate over residues arginine 347 to glycine 361. Threonine 348 carries the post-translational modification Phosphothreonine. 4 positions are modified to phosphoserine: serine 350, serine 352, serine 353, and serine 355. Threonine 357 bears the Phosphothreonine mark. Serine 370 bears the Phosphoserine mark.

It belongs to the NDRG family. Interacts with CTNNB1. Highly expressed in brain, heart, skeletal muscle and salivary gland, and moderately in kidney and liver. Expressed in dendritic cells, but not in other blood cells. Expression levels are low in pancreatic and liver cancer tissues; absent in meningioma. Expressed in low-grade gliomas but present at low levels in glioblastoma. Isoform 1 and isoform 2 are present in brain neurons and up-regulated in Alzheimer disease (at protein level).

The protein localises to the cytoplasm. It is found in the perinuclear region. It localises to the cell projection. The protein resides in the growth cone. In terms of biological role, contributes to the regulation of the Wnt signaling pathway. Down-regulates CTNNB1-mediated transcriptional activation of target genes, such as CCND1, and may thereby act as tumor suppressor. May be involved in dendritic cell and neuron differentiation. This is Protein NDRG2 (NDRG2) from Homo sapiens (Human).